Here is a 511-residue protein sequence, read N- to C-terminus: MSTIDSARPQLKIRSVALDTGRENVVVISRRSRALRPEVFSGFSRVELRCNSRTLLATLLITDDDALVGPDEIGLSQPALRRFAEPAGTFATVSPATPPDSLEAVRAKIRGETLSDQAISAVIDDLAHYRYSDMEIAAFLIGSASFMTSGELLALTRAMANAGTQLKWPEPVVVDKHCIGGIPGNRTSMVVVPIVAAHGLTIPKTSSRAITSPAGTADTMEVLARVNVGAEEMKSIVAACNGCVIWGGHVNLSPADDILISVERPLSLDTREQMVASILSKKLAAGSTHLLLDLPVGPTAKLSSGAEAMRLRKLFEFVGDRFGLNVEVITTDGRQPIGNGIGPVLEARDVMAVLGNEPGAPADLREKSLRLAAHLLEYDPKLRGGAGYQRARELLDSGAALKQMQKIIDAQGPTTSRNELGDLAFDVKAGRDGIVSAIDCLRLNRLARTAGAPINKGAGIRLFKKIGDRVDQGEPLYRVFTCDPSEHDLAVAAAAADHGYGFADEPNGHQR.

The protein belongs to the thymidine/pyrimidine-nucleoside phosphorylase family. Type 2 subfamily.

The enzyme catalyses thymidine + phosphate = 2-deoxy-alpha-D-ribose 1-phosphate + thymine. This chain is Putative thymidine phosphorylase, found in Bradyrhizobium sp. (strain BTAi1 / ATCC BAA-1182).